A 125-amino-acid chain; its full sequence is Holo-[acyl-carrier-protein] synthase (125 aa).

Mg(2+) contacts are provided by Asp-9 and Glu-58.

Belongs to the P-Pant transferase superfamily. AcpS family. It depends on Mg(2+) as a cofactor.

It is found in the cytoplasm. The enzyme catalyses apo-[ACP] + CoA = holo-[ACP] + adenosine 3',5'-bisphosphate + H(+). Functionally, transfers the 4'-phosphopantetheine moiety from coenzyme A to a Ser of acyl-carrier-protein. This chain is Holo-[acyl-carrier-protein] synthase, found in Shewanella amazonensis (strain ATCC BAA-1098 / SB2B).